The sequence spans 365 residues: 3-dehydroquinate synthase (365 aa).

NAD(+)-binding positions include 107-111 (GVIGD), 131-132 (TT), lysine 144, and lysine 153. Zn(2+) is bound by residues glutamate 186, histidine 251, and histidine 268.

Belongs to the sugar phosphate cyclases superfamily. Dehydroquinate synthase family. Requires Co(2+) as cofactor. The cofactor is Zn(2+). NAD(+) serves as cofactor.

It localises to the cytoplasm. The enzyme catalyses 7-phospho-2-dehydro-3-deoxy-D-arabino-heptonate = 3-dehydroquinate + phosphate. The protein operates within metabolic intermediate biosynthesis; chorismate biosynthesis; chorismate from D-erythrose 4-phosphate and phosphoenolpyruvate: step 2/7. Its function is as follows. Catalyzes the conversion of 3-deoxy-D-arabino-heptulosonate 7-phosphate (DAHP) to dehydroquinate (DHQ). The sequence is that of 3-dehydroquinate synthase from Picosynechococcus sp. (strain ATCC 27264 / PCC 7002 / PR-6) (Agmenellum quadruplicatum).